We begin with the raw amino-acid sequence, 152 residues long: Transcriptional repressor NrdR (152 aa).

A zinc finger spans residues 3–34; the sequence is CPYCSYNESKVVDSRSTEDSISIRRRRECLEC. One can recognise an ATP-cone domain in the interval 49–139; that stretch reads ILVIKKNLNR…VYRQFKDINT (91 aa).

Belongs to the NrdR family. It depends on Zn(2+) as a cofactor.

Functionally, negatively regulates transcription of bacterial ribonucleotide reductase nrd genes and operons by binding to NrdR-boxes. In Clostridium tetani (strain Massachusetts / E88), this protein is Transcriptional repressor NrdR.